Reading from the N-terminus, the 242-residue chain is MMNFADTLVILNEDAPCELLRKKYAQMLVPTVSVSNFKKNKQYKTYNNVFLYTYREYDFLWDLDDNVLHKIQRCLNKSGVLKLVLYISNTDGGDNKTHDEIAKRLKRECLYSGFINISNEISMAENGIIINVTAENPDFLSNEDDDEGNSSDGEAYQNAEDNKKVVNRVCANCTCGKKTNGVKLDKVTINEKEVQYLTENAVSSCGNCYLGDAFRCASCPYKGLPAFQPGENVKLNLDNEPN.

The tract at residues 1 to 140 is N-terminal SAM-like domain; it reads MMNFADTLVI…NVTAENPDFL (140 aa). Residues 141–162 form a linker region; sequence SNEDDDEGNSSDGEAYQNAEDN. 4 residues coordinate [4Fe-4S] cluster: cysteine 205, cysteine 208, cysteine 216, and cysteine 219. Short sequence motifs (cx2C motif) lie at residues 205 to 208 and 216 to 219; these read CGNC and CASC. Positions 205–219 are fe-S binding site B; it reads CGNCYLGDAFRCASC.

This sequence belongs to the anamorsin family. Monomer. [4Fe-4S] cluster serves as cofactor.

The protein resides in the cytoplasm. It is found in the mitochondrion intermembrane space. Functionally, component of the cytosolic iron-sulfur (Fe-S) protein assembly (CIA) machinery. Required for the maturation of extramitochondrial Fe-S proteins. Part of an electron transfer chain functioning in an early step of cytosolic Fe-S biogenesis, facilitating the de novo assembly of a [4Fe-4S] cluster on the cytosolic Fe-S scaffold complex. Electrons are transferred from NADPH via a FAD- and FMN-containing diflavin oxidoreductase. Together with the diflavin oxidoreductase, also required for the assembly of the diferric tyrosyl radical cofactor of ribonucleotide reductase (RNR), probably by providing electrons for reduction during radical cofactor maturation in the catalytic small subunit. In Plasmodium knowlesi (strain H), this protein is Anamorsin homolog.